A 351-amino-acid chain; its full sequence is Ribosomal RNA large subunit methyltransferase M (351 aa).

Residues S186, 219-222 (APGG), D238, D258, and D274 each bind S-adenosyl-L-methionine. K303 (proton acceptor) is an active-site residue.

The protein belongs to the class I-like SAM-binding methyltransferase superfamily. RNA methyltransferase RlmE family. RlmM subfamily. As to quaternary structure, monomer.

The protein resides in the cytoplasm. It carries out the reaction cytidine(2498) in 23S rRNA + S-adenosyl-L-methionine = 2'-O-methylcytidine(2498) in 23S rRNA + S-adenosyl-L-homocysteine + H(+). In terms of biological role, catalyzes the 2'-O-methylation at nucleotide C2498 in 23S rRNA. This chain is Ribosomal RNA large subunit methyltransferase M, found in Xylella fastidiosa (strain M12).